The primary structure comprises 2450 residues: MEQPPPLAPEPASARSRRRREPESPPAPIPLFGARTVVQRSPDEPALSKAEFVEKVRQSNQACHDGDFHTAIVLYNEALAVDPQNCILYSNRSAAYMKTQQYHKALDDAIKARLLNPKWPKAYFRQGVALQYLGRHADALAAFASGLAQDPKSLQLLVGMVEAAMKSPMRDTLEPTYQQLQKMKLDKSPFVVVSVVGQELLTAGHHGASVVVLEAALKIGTCSLKLRGSVFSALSSAHWSLGNTEKSTGYMQQDLDVAKTLGDQTGECRAHGNLGSAFFSKGNYREALTNHRHQLVLAMKLKDREAASSALSSLGHVYTAIGDYPNALASHKQCVLLAKQSKDDLSEARELGNMGAVYIAMGDFENAVQCHEQHLRIAKDLGSKREEARAYSNLGSAYHYRRNFDKAMSYHNCVLELAQELMEKPIEMRAYAGLGHAARCMQDLERAKQYHEQQLGIAEDLKDRAAEGRASSNLGIIHQMKGDYDTALKLHKTHLCIAQELSDYAAQGRAYGNMGNAYNALGMYDQAVKYHRQELQISMEVNDRASQASTHGNLAVAYQALGAHDRALQHYQNHLNIARELRDIQSEARALSNLGNFHCSRGEYVQAAPYYEQYLRLAPDLQDMEGEGKVCHNLGYAHYCLGNYQEAVKYYEQDLALAKDLHDKLSQAKAYCNLGLAFKALLNFAKAEECQKYLLSLAQSLDNSQAKFRALGNLGDIFICKKDINGAIKFYEQQLGLSHHVKDRRLEASAYAALGTAYRMVQKYDKALGYHTQELEVYQELSDLPGECRAHGHLAAVYMALGKYTMAFKCYQEQLELGRKLKEPSLEAQVYGNMGITKMNMNVMEDAIGYFEQQLAMLQQLSGNESVLDRGRAYGNLGDCYEALGDYEEAIKYYEQYLSVAQSLNRMQDQAKAYRGLGNGHRATGSLQQALVCFEKRLVVAHELGEASNKAQAYGELGSLHSQLGNYEQAISCLERQLNIARDMKDRALESDAACGLGGVYQQMGEYDTALQYHQLDLQIAEETDNPTCQGRAYGNLGLTYESLGTFERAVVYQEQHLSIAAQMNDLVAKTVSYSSLGRTHHALQNYSQAVMYLQEGLRLAEQLGRREDEAKIRHGLGLSLWASGNLEEAQHQLYRASALFETIRHEAQLSTDYKLSLFDLQTSSYQALQRVLVSLGHHDEALAVAERGRTRAFADLLVERQTGQQDSDPYSPITIDQILEMVNAQRGLVLYYSLAAGYLYSWLLAPGAGILKFHEHYLGDNSVESSSDFQAGSSAALPVATNSTLEQHIASVREALGVESYYSRACASSETESEAGDIMEQQLEEMNKQLNSVTDPTGFLRMVRHNNLLHRSCQSMTSLFSGTVSPSKDGTSSLPRRQNSLAKPPLRALYDLLIAPMEGGLMHSSGPVGRHRQLVLVLEGELYFVPFALLKGSASNEYLYERFTLIAVPAVRSLGPHSKCHLRKTPPTYSSSTTMAAVIGNPKLPSAVMDRWLWGPMPSAEEEAFMVSELLGCQPLVGSMATKERVMSALTQAECVHFATHVSWKLSALVLTPNTEGNPAGSKSSFGHPYTIPESLRVQDDASDVESISDCPPLRELLLTAADLLDLRLSVKLVVLSSSQEANGRVTADGLVALTRAFLAAGAQCVLVALWPVPVAASKMFVHAFYSSLLNGLKASASLGEAMKVVQSSKAFSHPSNWAGFTLIGSDVKLNSPSSLIGQALTEILQHPERARDALRVLLHLVEKSLQRIQNGQRNAMYTSQQSVENKVGGIPGWQALLTAVGFRLDPAASGLPAAVFFPTSDPGDRLQQCSSTLQALLGLPNPALQALCKLITASETGEQLISRAVKNMVGMLHQVLVQLQACEKEQDFASAPIPVSLSVQLWRLPGCHEFLAALGFDLCEVGQEEVILKTGKQASRRTTHFALQSLLSLFDSTELPKRLSLDSSSSLESLASAQSVSNALPLGYQHPPFSPTGADSIASDAISVYSLSSIASSMSFVSKPEGGLEGGGPRGRQDYDRSKSTHPQRATLPRRQTSPQARRGASKEEEEYEGFSIISMEPLATYQGEGKTRFSPDPKQPCVKAPGGVRLSVSSKGSVSTPNSPVKMTLIPSPNSPFQKVGKLASSDTGESDQSSTETDSTVKSQEESTPKLDPQELAQRILEETKSHLLAVERLQRSGGPAGPDREDSVVAPSSTTVFRASETSAFSKPILSHQRSQLSPLTVKPQPPARSSSLPKVSSPATSEVSGKDGLSPPGSSHPSPGRDTPVSPADPPLFRLKYPSSPYSAHISKSPRNTSPACSAPSPALSYSSAGSARSSPADAPDEKVQAVHSLKMLWQSTPQPPRGPRKTCRGAPGTLTSKRDVLSLLNLSPRHGKEEGGADRLELKELSVQRHDEVPPKVPTNGHWCTDTATLTTAGGRSTTAAPRPLRLPLANGYKFLSPGRLFPSSKC.

An N-acetylmethionine modification is found at Met-1. The disordered stretch occupies residues 1-36; that stretch reads MEQPPPLAPEPASARSRRRREPESPPAPIPLFGART. The residue at position 24 (Ser-24) is a Phosphoserine. 28 TPR repeats span residues 52 to 85, 87 to 119, 120 to 153, 190 to 223, 228 to 261, 268 to 301, 308 to 341, 348 to 381, 388 to 421, 428 to 461, 468 to 501, 508 to 541, 548 to 581, 588 to 621, 628 to 661, 668 to 701, 708 to 741, 748 to 781, 788 to 821, 828 to 861, 871 to 904, 911 to 944, 951 to 984, 991 to 1024, 1031 to 1064, 1071 to 1104, 1111 to 1144, and 1163 to 1196; these read FVEK…DPQN, ILYS…NPKW, PKAY…DPKS, FVVV…GTCS, GSVF…AKTL, CRAH…AMKL, SSAL…AKQS, AREL…AKDL, ARAY…AQEL, MRAY…AEDL, GRAS…AQEL, GRAY…SMEV, ASTH…AREL, ARAL…APDL, GKVC…AKDL, AKAY…AQSL, FRAL…SHHV, ASAY…YQEL, CRAH…GRKL, AQVY…LQQL, GRAY…AQSL, AKAY…AHEL, AQAY…ARDM, SDAA…AEET, GRAY…AAQM, TVSY…AEQL, AKIR…FETI, and TSSY…AFAD. The interval 1362 to 1381 is disordered; sequence SGTVSPSKDGTSSLPRRQNS. Residues Ser-1584 and Ser-2098 each carry the phosphoserine modification. Residues 2001–2364 form a disordered region; that stretch reads KPEGGLEGGG…GTLTSKRDVL (364 aa). Over residues 2090-2116 the composition is skewed to polar residues; it reads SVSSKGSVSTPNSPVKMTLIPSPNSPF. Positions 2124 to 2140 are enriched in low complexity; it reads SSDTGESDQSSTETDST. Basic and acidic residues predominate over residues 2143–2153; that stretch reads SQEESTPKLDP. The segment covering 2191–2206 has biased composition (polar residues); that stretch reads APSSTTVFRASETSAF. Ser-2216 carries the post-translational modification Phosphoserine. A compositionally biased stretch (polar residues) spans 2229–2245; that stretch reads ARSSSLPKVSSPATSEV. Composition is skewed to low complexity over residues 2252-2262 and 2296-2320; these read SPPGSSHPSPG and SPAC…SPAD. Residues Ser-2365 and Ser-2370 each carry the phosphoserine modification.

In terms of assembly, interacts with AURKB. As to expression, expressed in embryos at all stages examined. In adult tissues, detected in heart and at low levels in kidney and testis.

It localises to the cytoplasm. It is found in the cytoskeleton. The protein localises to the microtubule organizing center. Its subcellular location is the centrosome. The protein resides in the spindle. It localises to the spindle pole. It is found in the midbody. Its function is as follows. During mitosis, may be involved in the condensation of spindle midzone microtubules, leading to the formation of midbody. Functionally, essential for the formation and integrity of the midbody. Max play a critical role in the progress of mitosis and cytokinesis during cell cycle. This Mus musculus (Mouse) protein is Tetratricopeptide repeat protein 28 (Ttc28).